We begin with the raw amino-acid sequence, 409 residues long: MAGNILLLILDYVFHAGSRTLRVCILSLLILLSGCANLSDLGGGHLTDLFSSEEDEVEIDEAEIVALQTLAPINPLWQVKLAESKTAVFLPVYDNGALYVADEDGRLVKLDPVTGREIWRVETKSQLSGGVGAGGGMILLGTYKGEVLAFDEAGNALWQSRVPGEVLSPPKTDSGIVVVRTGDSKLFGLNATDGKRIWSYQSVTPPLTVRSFVGVSITRGAVFAGFPGGKLIALDLLTGNVGWEETVSQPHGVTELERMTDISSLPIVDENQVCAVAYRGRAACFEISSGNQIWARDASSSMGMVIDNHHVYISEEHGIVAAYDKSSGTAVWKRGKLGSRKLSGLMIVRGNRLVVGDDQGFVTLINRQDGSLLARSPTDGGIILSRAEYLPDGFVVQTLKGGVFAFSLQ.

A signal peptide spans 1 to 34 (MAGNILLLILDYVFHAGSRTLRVCILSLLILLSG). Cys-35 carries the N-palmitoyl cysteine lipid modification. Cys-35 is lipidated: S-diacylglycerol cysteine.

This sequence belongs to the BamB family. As to quaternary structure, part of the Bam complex.

It localises to the cell outer membrane. Its function is as follows. Part of the outer membrane protein assembly complex, which is involved in assembly and insertion of beta-barrel proteins into the outer membrane. The chain is Outer membrane protein assembly factor BamB from Nitrosomonas eutropha (strain DSM 101675 / C91 / Nm57).